Here is a 194-residue protein sequence, read N- to C-terminus: Imidazoleglycerol-phosphate dehydratase (194 aa).

It belongs to the imidazoleglycerol-phosphate dehydratase family.

It localises to the cytoplasm. It catalyses the reaction D-erythro-1-(imidazol-4-yl)glycerol 3-phosphate = 3-(imidazol-4-yl)-2-oxopropyl phosphate + H2O. Its pathway is amino-acid biosynthesis; L-histidine biosynthesis; L-histidine from 5-phospho-alpha-D-ribose 1-diphosphate: step 6/9. The chain is Imidazoleglycerol-phosphate dehydratase from Thermus thermophilus (strain ATCC BAA-163 / DSM 7039 / HB27).